The chain runs to 455 residues: Phosphoglucosamine mutase (455 aa).

S106 functions as the Phosphoserine intermediate in the catalytic mechanism. S106, D245, D247, and D249 together coordinate Mg(2+). S106 is modified (phosphoserine).

It belongs to the phosphohexose mutase family. It depends on Mg(2+) as a cofactor. Post-translationally, activated by phosphorylation.

The catalysed reaction is alpha-D-glucosamine 1-phosphate = D-glucosamine 6-phosphate. In terms of biological role, catalyzes the conversion of glucosamine-6-phosphate to glucosamine-1-phosphate. In Acaryochloris marina (strain MBIC 11017), this protein is Phosphoglucosamine mutase.